Reading from the N-terminus, the 430-residue chain is MKKQIFFTLILLISGLARADLVIEIDKGSRAAIPVAVVPFANESGQPLAEDIGQIFTEDLKRSGDIEPLDRTKMVSIPSKAEEIYFRDWGLLGQRYLLVGGVQYDAPSQVYKVRYELYNVQSQQRVIGKIISGKSEKLRDMGHAIADAVYEAVTGIRGVFSTRIAYVTLEKSGAKNIYRLEVADADGRRSTELLKRSMPIISPAWSPDGKKLAYVSFESQRPAIYVQDVDTGTRTQVTSFKGLNSAPTWSPDGTKLAVTLSKDGNAELYVLDLRNNSLKRLTNHWAIDTEASWSPDGRTIAFTSDRGGGPQIYLVDASGGSPRRLTFEGRYNSRPRFSVDGKKVYYVHQRDGSFNVASLDLESGQDQILTQTEMDESPSVAPNGSMIIYATQKNGKGVLAVVGVNSGSKYTLPAQFGDVREPAWSPYISR.

Residues 1 to 19 (MKKQIFFTLILLISGLARA) form the signal peptide.

This sequence belongs to the TolB family. The Tol-Pal system is composed of five core proteins: the inner membrane proteins TolA, TolQ and TolR, the periplasmic protein TolB and the outer membrane protein Pal. They form a network linking the inner and outer membranes and the peptidoglycan layer.

It localises to the periplasm. Its function is as follows. Part of the Tol-Pal system, which plays a role in outer membrane invagination during cell division and is important for maintaining outer membrane integrity. This is Tol-Pal system protein TolB from Hahella chejuensis (strain KCTC 2396).